The sequence spans 194 residues: Leucyl/phenylalanyl-tRNA--protein transferase (194 aa).

The protein belongs to the L/F-transferase family.

The protein localises to the cytoplasm. The enzyme catalyses N-terminal L-lysyl-[protein] + L-leucyl-tRNA(Leu) = N-terminal L-leucyl-L-lysyl-[protein] + tRNA(Leu) + H(+). The catalysed reaction is N-terminal L-arginyl-[protein] + L-leucyl-tRNA(Leu) = N-terminal L-leucyl-L-arginyl-[protein] + tRNA(Leu) + H(+). It carries out the reaction L-phenylalanyl-tRNA(Phe) + an N-terminal L-alpha-aminoacyl-[protein] = an N-terminal L-phenylalanyl-L-alpha-aminoacyl-[protein] + tRNA(Phe). Functions in the N-end rule pathway of protein degradation where it conjugates Leu, Phe and, less efficiently, Met from aminoacyl-tRNAs to the N-termini of proteins containing an N-terminal arginine or lysine. The polypeptide is Leucyl/phenylalanyl-tRNA--protein transferase (Chlorobium limicola (strain DSM 245 / NBRC 103803 / 6330)).